The primary structure comprises 276 residues: Aquaporin-1 (276 aa).

Residues 1-10 are Cytoplasmic-facing; that stretch reads MLDAEQKKNY. A helical transmembrane segment spans residues 11 to 31; the sequence is VAGAFGEFVGTAYFLFMGVGG. Topologically, residues 32–46 are extracellular; it reads AVNFLNNAAGSPLPG. The helical transmembrane segment at 47–67 threads the bilayer; that stretch reads FAIPFCFGFSLFVNVFIWAPI. Residues 68–93 lie on the Cytoplasmic side of the membrane; sequence SGGVFNPSITIALMATNPKDFPWYRG. An NPA 1 motif is present at residues 73–75; that stretch reads NPS. The helical transmembrane segment at 94–114 threads the bilayer; sequence ILYIVSQFLGALFGSWLIDLI. The Extracellular segment spans residues 115–133; it reads QPEAPNAATLLADGVSVAQ. The helical transmembrane segment at 134 to 154 threads the bilayer; that stretch reads GLFMEMFATSVLTMAVLILAG. Over 155 to 159 the chain is Cytoplasmic; it reads ERYGK. Residues 160-180 form a helical membrane-spanning segment; the sequence is YLAPFGIGMSLFISALCAGPY. The Extracellular portion of the chain corresponds to 181-204; that stretch reads TGASLNPARTLGPAIVANQYGRAH. The NPA 2 motif lies at 186-188; it reads NPA. The chain crosses the membrane as a helical span at residues 205–225; it reads WIYYVGPTLGSLLAAGYWHIL. Residues 226 to 276 lie on the Cytoplasmic side of the membrane; that stretch reads RILNIDVVDLKNVLNKCKKCGKEDPRISLKHCEECLKDDPKPEKYDIESQN.

The protein belongs to the MIP/aquaporin (TC 1.A.8) family.

Its subcellular location is the cell membrane. The catalysed reaction is H2O(in) = H2O(out). With respect to regulation, polyethylene glycol (PEG) stimulates whereas glycerol inhibits the aquaporin activity. Functionally, water channel required to facilitate the transport of water across membranes. Stimulates plant drought tolerance by facilitating the transport of water from the arbuscular mycorrhiza fungus to host plants. This is Aquaporin-1 from Rhizophagus irregularis (Arbuscular mycorrhizal fungus).